Reading from the N-terminus, the 205-residue chain is MFLRHFIVFSFIALLAGCAGFGARESVQGQGNPAQWRLHKDQLTGLDGWQINGKIGIRAPKDSGSGTLFWLQRQDYYDIRLSGPLGRGAARLTGRPGQVSLEVANQGRYESASPETLLEEQLGWKLPVSHLAWWVRGLPAPDSKSRLTLDGDSHLASLEQDGWQVEYSSYSQQNGYWLPERIKLNGSDLDVTLVIKEWLPRKLGQ.

A signal peptide spans 1–17 (MFLRHFIVFSFIALLAG). Residue Cys18 is the site of N-palmitoyl cysteine attachment. A lipid anchor (S-diacylglycerol cysteine) is attached at Cys18.

This sequence belongs to the LolB family. As to quaternary structure, monomer.

The protein resides in the cell outer membrane. Functionally, plays a critical role in the incorporation of lipoproteins in the outer membrane after they are released by the LolA protein. The chain is Outer-membrane lipoprotein LolB from Pseudomonas fluorescens (strain ATCC BAA-477 / NRRL B-23932 / Pf-5).